A 357-amino-acid polypeptide reads, in one-letter code: (+)-eremophilene synthase (357 aa).

Asp100 and Glu105 together coordinate Mg(2+). Residues 100 to 105 carry the DDXXE motif motif; that stretch reads DDDFDE. Arg198 serves as a coordination point for substrate. Residues Asn244 and Ser248 each coordinate Mg(2+). A substrate-binding site is contributed by Lys251. A Mg(2+)-binding site is contributed by Asp252. Residue 331-332 participates in substrate binding; that stretch reads RY.

The protein belongs to the terpene synthase family. The cofactor is Mg(2+).

The catalysed reaction is (2E,6E)-farnesyl diphosphate = (+)-eremophilene + diphosphate. It participates in secondary metabolite biosynthesis; terpenoid biosynthesis. Functionally, catalyzes the conversion of (2E,6E)-farnesyl diphosphate (FPP) to yield the bicyclic sesquiterpene eremophilene via a 1,10-cyclization, which requires the abstraction of the pyrophosphate from FPP to yield the (E,E)-germacradienyl cation. The only accepted substrate is farnesyl diphosphate (FPP). The protein is (+)-eremophilene synthase of Gibberella fujikuroi (strain CBS 195.34 / IMI 58289 / NRRL A-6831) (Bakanae and foot rot disease fungus).